The sequence spans 353 residues: Photosystem II D2 protein (353 aa).

T2 bears the N-acetylthreonine mark. The residue at position 2 (T2) is a Phosphothreonine. The chain crosses the membrane as a helical span at residues 41–61 (CAYFALGGWFTGTTFVTSWYT). Residue H118 participates in chlorophyll a binding. The chain crosses the membrane as a helical span at residues 125 to 141 (GFMLRQFELARSVQLRP). 2 residues coordinate pheophytin a: Q130 and N143. Residues 153-166 (VFVSVFLIYPLGQS) form a helical membrane-spanning segment. H198 lines the chlorophyll a pocket. A helical transmembrane segment spans residues 208 to 228 (AALLCAIHGATVENTLFEDGD). A plastoquinone is bound by residues H215 and F262. Residue H215 participates in Fe cation binding. Position 269 (H269) interacts with Fe cation. A helical transmembrane segment spans residues 279–295 (GLWMSAIGVVGLALNLR).

The protein belongs to the reaction center PufL/M/PsbA/D family. In terms of assembly, PSII is composed of 1 copy each of membrane proteins PsbA, PsbB, PsbC, PsbD, PsbE, PsbF, PsbH, PsbI, PsbJ, PsbK, PsbL, PsbM, PsbT, PsbX, PsbY, PsbZ, Psb30/Ycf12, at least 3 peripheral proteins of the oxygen-evolving complex and a large number of cofactors. It forms dimeric complexes. Requires The D1/D2 heterodimer binds P680, chlorophylls that are the primary electron donor of PSII, and subsequent electron acceptors. It shares a non-heme iron and each subunit binds pheophytin, quinone, additional chlorophylls, carotenoids and lipids. There is also a Cl(-1) ion associated with D1 and D2, which is required for oxygen evolution. The PSII complex binds additional chlorophylls, carotenoids and specific lipids. as cofactor.

Its subcellular location is the plastid. It localises to the chloroplast thylakoid membrane. It carries out the reaction 2 a plastoquinone + 4 hnu + 2 H2O = 2 a plastoquinol + O2. Functionally, photosystem II (PSII) is a light-driven water:plastoquinone oxidoreductase that uses light energy to abstract electrons from H(2)O, generating O(2) and a proton gradient subsequently used for ATP formation. It consists of a core antenna complex that captures photons, and an electron transfer chain that converts photonic excitation into a charge separation. The D1/D2 (PsbA/PsbD) reaction center heterodimer binds P680, the primary electron donor of PSII as well as several subsequent electron acceptors. D2 is needed for assembly of a stable PSII complex. The polypeptide is Photosystem II D2 protein (Cycas taitungensis (Prince sago)).